A 96-amino-acid polypeptide reads, in one-letter code: Pyrimidine/purine nucleoside phosphorylase (96 aa).

This sequence belongs to the nucleoside phosphorylase PpnP family.

It carries out the reaction a purine D-ribonucleoside + phosphate = a purine nucleobase + alpha-D-ribose 1-phosphate. The enzyme catalyses adenosine + phosphate = alpha-D-ribose 1-phosphate + adenine. It catalyses the reaction cytidine + phosphate = cytosine + alpha-D-ribose 1-phosphate. The catalysed reaction is guanosine + phosphate = alpha-D-ribose 1-phosphate + guanine. It carries out the reaction inosine + phosphate = alpha-D-ribose 1-phosphate + hypoxanthine. The enzyme catalyses thymidine + phosphate = 2-deoxy-alpha-D-ribose 1-phosphate + thymine. It catalyses the reaction uridine + phosphate = alpha-D-ribose 1-phosphate + uracil. The catalysed reaction is xanthosine + phosphate = alpha-D-ribose 1-phosphate + xanthine. In terms of biological role, catalyzes the phosphorolysis of diverse nucleosides, yielding D-ribose 1-phosphate and the respective free bases. Can use uridine, adenosine, guanosine, cytidine, thymidine, inosine and xanthosine as substrates. Also catalyzes the reverse reactions. The sequence is that of Pyrimidine/purine nucleoside phosphorylase from Erwinia tasmaniensis (strain DSM 17950 / CFBP 7177 / CIP 109463 / NCPPB 4357 / Et1/99).